Consider the following 422-residue polypeptide: Interleukin-11 receptor subunit alpha (422 aa).

The N-terminal stretch at 1-22 (MSSSCSGLSRVLVAVATALVSA) is a signal peptide. Over 24–370 (SPCPQAWGPP…DSVEQVAVLV (347 aa)) the chain is Extracellular. In terms of domain architecture, Ig-like C2-type spans 27-110 (PQAWGPPGVQ…LGGTVTLQLG (84 aa)). Disulfide bonds link cysteine 48/cysteine 94, cysteine 120/cysteine 130, and cysteine 170/cysteine 180. 2 Fibronectin type-III domains span residues 112–219 (PPAR…LRPD) and 220–317 (PPQG…TPST). An N-linked (GlcNAc...) asparagine glycan is attached at asparagine 127. The N-linked (GlcNAc...) asparagine glycan is linked to asparagine 194. Residues 304–308 (WSTWS) carry the WSXWS motif motif. A disordered region spans residues 335–355 (EVEPQVDSPAPPRPSLQPHPR). A helical membrane pass occupies residues 371 to 391 (SLGILSFLGLVAGALALGLWL). The Cytoplasmic segment spans residues 392–422 (RLRRGGKDGSPKPGFLASVIPVDRHPGAPNL).

The protein belongs to the type I cytokine receptor family. Type 3 subfamily. In terms of assembly, on IL11 binding, forms a multimer complex with IL6ST/gp130. A short soluble form is also released from the membrane by proteolysis. The sIL11RA is formed either by limited proteolysis of membrane-bound receptors, a process referred to as ectodomain shedding, or directly secreted from the cells after alternative mRNA splicing. mIL11RA is cleaved by the proteases ADAM10, ELANE and PRTN3.

The protein localises to the membrane. The protein resides in the secreted. Functionally, receptor for interleukin-11 (IL11). The receptor systems for IL6, LIF, OSM, CNTF, IL11 and CT1 can utilize IL6ST for initiating signal transmission. The IL11/IL11RA/IL6ST complex may be involved in the control of proliferation and/or differentiation of skeletogenic progenitor or other mesenchymal cells. Essential for the normal development of craniofacial bones and teeth. Restricts suture fusion and tooth number. Soluble form of IL11 receptor (sIL11RA) that acts as an agonist of IL11 activity. The IL11:sIL11RA complex binds to IL6ST/gp130 on cell surfaces and induces signaling also on cells that do not express membrane-bound IL11RA in a process called IL11 trans-signaling. This chain is Interleukin-11 receptor subunit alpha (IL11RA), found in Pongo abelii (Sumatran orangutan).